The chain runs to 472 residues: ESX-3 secretion system protein EccD3 (472 aa).

11 helical membrane passes run 121–141 (WGIA…ALLA), 155–175 (LAGL…GLLI), 183–203 (GIAL…LAVP), 211–231 (VLLG…IPSA), 236–256 (VVAF…AAGA), 258–278 (LLWQ…ALLV), 327–347 (QSGF…AIAV), 349–369 (PEAL…AATL), 381–401 (AWLL…YTAT), 405–425 (VAAF…VVVA), and 450–470 (GLDV…AWVL).

The protein belongs to the EccD/Snm4 family. In terms of assembly, part of the ESX-3 / type VII secretion system (T7SS), which is composed of cytosolic and membrane components. The ESX-3 membrane complex is composed of EccB3, EccC3, EccD3 and EccE3.

Its subcellular location is the cell inner membrane. In terms of biological role, part of the ESX-3 specialized secretion system, which is important for iron and zinc uptake or homeostasis. The protein is ESX-3 secretion system protein EccD3 of Mycobacterium tuberculosis (strain CDC 1551 / Oshkosh).